Reading from the N-terminus, the 88-residue chain is UPF0297 protein SSU98_0066 (88 aa).

This sequence belongs to the UPF0297 family.

The polypeptide is UPF0297 protein SSU98_0066 (Streptococcus suis (strain 98HAH33)).